A 322-amino-acid polypeptide reads, in one-letter code: Putative DNA-directed RNA polymerase subunit alpha-like 2 (322 aa).

The alpha N-terminal domain (alpha-NTD) stretch occupies residues 1–232 (MSNPNNGAEW…GLLSLVFQAE (232 aa)). An alpha C-terminal domain (alpha-CTD) region spans residues 280–322 (EGPVTDEEGDSIDPTFTPVQKWDITMNSYQYSGETFQGLLSRF).

The protein belongs to the RNA polymerase alpha chain family. In plastids the minimal PEP RNA polymerase catalytic core is composed of four subunits: alpha, beta, beta', and beta''. When a (nuclear-encoded) sigma factor is associated with the core the holoenzyme is formed, which can initiate transcription.

It is found in the plastid. The protein localises to the chloroplast. It carries out the reaction RNA(n) + a ribonucleoside 5'-triphosphate = RNA(n+1) + diphosphate. Its function is as follows. DNA-dependent RNA polymerase catalyzes the transcription of DNA into RNA using the four ribonucleoside triphosphates as substrates. This Pelargonium hortorum (Common geranium) protein is Putative DNA-directed RNA polymerase subunit alpha-like 2 (rpoAL2-A).